A 472-amino-acid chain; its full sequence is Carboxypeptidase E (472 aa).

An N-terminal signal peptide occupies residues 1-21 (MLHAMRPVLLVAALLAVTAHA). A Peptidase M14 domain is found at 39–359 (HYHNQAQLEA…KSIFEYVWKS (321 aa)). 2 residues coordinate Zn(2+): H101 and E104. A glycan (N-linked (GlcNAc...) asparagine) is linked at N134. Residue H232 participates in Zn(2+) binding. Residue E329 is the Proton donor/acceptor of the active site. Residues N385 and N428 are each glycosylated (N-linked (GlcNAc...) asparagine).

It belongs to the peptidase M14 family. Requires Zn(2+) as cofactor. As to expression, expression is restricted to the nervous system.

It localises to the cell projection. Its subcellular location is the axon. It is found in the perikaryon. The protein resides in the cytoplasmic vesicle. The protein localises to the secretory vesicle lumen. It catalyses the reaction Release of C-terminal arginine or lysine residues from polypeptides.. During FMRFamide-like peptide (FaRPs or FLP) and neuropeptide-like protein (NLP) precursor processing, catalyzes the removal of Arg or Lys residues from the C-terminus following the initial endoprotease cleavage. By processing neuropeptides, modulates basal acetylcholine release at the ventral cord neuromuscular junctions. Involved in egg-laying, defecation and locomotion. By processing FLP neuropeptides, regulates the turning step of male mating behavior. Involved in reducing pharyngeal pumping in response to high CO(2) levels. This chain is Carboxypeptidase E, found in Caenorhabditis elegans.